The chain runs to 553 residues: CTP synthase (553 aa).

The amidoligase domain stretch occupies residues 1-275 (MPTETEYDPS…DQYVMEQFDM (275 aa)). Serine 24 serves as a coordination point for CTP. Serine 24 is a UTP binding site. Residue 25–30 (GLGKGI) participates in ATP binding. Tyrosine 65 is an L-glutamine binding site. Aspartate 82 serves as a coordination point for ATP. 2 residues coordinate Mg(2+): aspartate 82 and glutamate 150. Residues 157-159 (DIE), 196-201 (KTKPTQ), and lysine 232 each bind CTP. UTP-binding positions include 196–201 (KTKPTQ) and lysine 232. Residues 308–540 (KYALEDAYMS…LDAVLERADV (233 aa)) form the Glutamine amidotransferase type-1 domain. Residue glycine 362 coordinates L-glutamine. Cysteine 389 serves as the catalytic Nucleophile; for glutamine hydrolysis. L-glutamine is bound by residues 390 to 393 (LGFQ), glutamate 413, and arginine 470. Residues histidine 513 and glutamate 515 contribute to the active site.

The protein belongs to the CTP synthase family. In terms of assembly, homotetramer.

It carries out the reaction UTP + L-glutamine + ATP + H2O = CTP + L-glutamate + ADP + phosphate + 2 H(+). It catalyses the reaction L-glutamine + H2O = L-glutamate + NH4(+). The catalysed reaction is UTP + NH4(+) + ATP = CTP + ADP + phosphate + 2 H(+). It participates in pyrimidine metabolism; CTP biosynthesis via de novo pathway; CTP from UDP: step 2/2. Allosterically activated by GTP, when glutamine is the substrate; GTP has no effect on the reaction when ammonia is the substrate. The allosteric effector GTP functions by stabilizing the protein conformation that binds the tetrahedral intermediate(s) formed during glutamine hydrolysis. Inhibited by the product CTP, via allosteric rather than competitive inhibition. Functionally, catalyzes the ATP-dependent amination of UTP to CTP with either L-glutamine or ammonia as the source of nitrogen. Regulates intracellular CTP levels through interactions with the four ribonucleotide triphosphates. The chain is CTP synthase from Halobacterium salinarum (strain ATCC 29341 / DSM 671 / R1).